The sequence spans 485 residues: MALAVEKTSSGREYKVKDMSQADFGRLEIELAEVEMPGLMACRTEFGPSQPFKGAKITGSLHMTIQTAVLIETLTALGAEVRWCSCNIFSTQDHAAAAIARDSAAVFAWKGETLQEYWWCTERALDWGAGGGPDLIVDDGGDATLLIHEGVKAEEEYEKNGTIPDPTSTDNPEFQLVLGLIRDSLKVDPKRYHKMKTRLVGVSEETTTGVKRLYQMQATGTLLFPAINVNDSVTKSKFDNLYGCRHSLPDGLMRATDVMIAGKVGVVCGYGDVGKGCALALKAAGARVIVTEIDPICALQALMEGFQILTLEDVVSEADIFVTTTGNKDIIMVDHMRKMKNNAIVCNIGHFDNEIDMLGLENYPGVKRITIKPQTDRFVFPETNTGIIVLAEGRLMKLGCATGHPSFVMSCSFTNQVIAQLELWNERASGKYEKKVYVLPKHLDEKVAALHLGKLGAKLTKLSKDQADYISVPVEGPYKPAHYRY.

T64, D139, and E205 together coordinate substrate. Residue 206-208 (TTT) coordinates NAD(+). Substrate contacts are provided by K235 and D239. Residues N240, 269–274 (GYGDVG), E292, N327, and 348–350 (IGH) each bind NAD(+).

It belongs to the adenosylhomocysteinase family. Homotetramer. The cofactor is NAD(+).

The catalysed reaction is S-adenosyl-L-homocysteine + H2O = L-homocysteine + adenosine. It participates in amino-acid biosynthesis; L-homocysteine biosynthesis; L-homocysteine from S-adenosyl-L-homocysteine: step 1/1. Adenosylhomocysteine is a competitive inhibitor of S-adenosyl-L-methionine-dependent methyl transferase reactions; therefore adenosylhomocysteinase may play a key role in the control of methylations via regulation of the intracellular concentration of adenosylhomocysteine. This Mesembryanthemum crystallinum (Common ice plant) protein is Adenosylhomocysteinase (SAHH).